The sequence spans 139 residues: Iron-sulfur cluster assembly 1 homolog, mitochondrial (139 aa).

Fe cation is bound by residues Cys52, Cys117, and Cys119.

It belongs to the HesB/IscA family.

It localises to the mitochondrion. In terms of biological role, involved in the assembly of mitochondrial iron-sulfur proteins. Probably involved in the binding of an intermediate of Fe/S cluster assembly. In Dictyostelium discoideum (Social amoeba), this protein is Iron-sulfur cluster assembly 1 homolog, mitochondrial (isca1).